The chain runs to 1469 residues: Regulation of nuclear pre-mRNA domain-containing protein 2 (1469 aa).

Ala2 carries the N-acetylalanine modification. Ser16 is subject to Phosphoserine. A CID domain is found at 19–149 (SAGALESSLD…ALREALMDRA (131 aa)). 2 disordered regions span residues 329 to 445 (STLP…TAAP) and 489 to 524 (TGVS…PSHN). A compositionally biased stretch (basic and acidic residues) spans 370–386 (ESDKSATPEPVTDNRDV). At Ser374 the chain carries Phosphoserine. Position 376 is a phosphothreonine (Thr376). Acidic residues predominate over residues 387–396 (EDMELSDVED). Ser392 is modified (phosphoserine). Residues 397 to 412 (DGSKIIVEDRKEKPVE) are compositionally biased toward basic and acidic residues. The segment covering 419–430 (GVPTKSTESVSK) has biased composition (polar residues). Positions 434–445 (CAPPSVPTTAAP) are enriched in pro residues. Ser492, Ser495, Ser498, and Ser504 each carry phosphoserine. Phosphothreonine is present on Thr536. The tract at residues 572–594 (ASEVTSQSTTASPASTTGSAVKG) is disordered. Over residues 576–591 (TSQSTTASPASTTGSA) the composition is skewed to low complexity. Phosphoserine is present on residues Ser583 and Ser612. The residue at position 617 (Thr617) is a Phosphothreonine. Ser633 carries the post-translational modification Phosphoserine. Over residues 647 to 656 (SLGFTGTHNP) the composition is skewed to polar residues. 7 disordered regions span residues 647 to 686 (SLGF…TSPS), 716 to 867 (SSAP…AMMN), 919 to 1013 (SENC…SGVE), 1033 to 1140 (KNAS…HGRE), 1154 to 1183 (SSFD…FKTT), 1204 to 1328 (FNST…PTPP), and 1368 to 1414 (GPGL…HRDA). A phosphoserine mark is found at Ser682, Ser684, Ser735, and Ser738. At Thr742 the chain carries Phosphothreonine. Position 749 is a phosphoserine (Ser749). Position 751 is a phosphothreonine (Thr751). Polar residues predominate over residues 761–771 (PTSSSVDTMSL). A phosphoserine mark is found at Ser777 and Ser781. Low complexity predominate over residues 777-787 (SPGSSTPSSTR). Thr782 carries the phosphothreonine modification. Phosphoserine occurs at positions 788, 836, 845, 919, and 947. A compositionally biased stretch (polar residues) spans 959-982 (PDSNHSGLSQSTAGHLTLPQTQYP). 2 positions are modified to phosphoserine: Ser984 and Ser995. Residues 1047–1073 (QTPNKGTSSDGVSLSNLTQPSLPTTDQ) are compositionally biased toward polar residues. A phosphoserine mark is found at Ser1086 and Ser1117. Low complexity predominate over residues 1159–1168 (GPSSASELAS). Residues 1169–1178 (LGGGGSGGLT) show a composition bias toward gly residues. Residues 1272 to 1295 (GPPPPPGEHSGVPFPPPPPPPPPG) are compositionally biased toward pro residues. Arg1375 bears the Asymmetric dimethylarginine mark. 2 stretches are compositionally biased toward low complexity: residues 1377–1390 (SLSL…HLGP) and 1400–1409 (TSSSGLPLSP). Asymmetric dimethylarginine is present on residues Arg1432 and Arg1438.

As to quaternary structure, associates with the RNA polymerase II complex.

This chain is Regulation of nuclear pre-mRNA domain-containing protein 2 (Rprd2), found in Mus musculus (Mouse).